Reading from the N-terminus, the 510-residue chain is NAD(P)H-quinone oxidoreductase subunit 2 B, chloroplastic (510 aa).

The next 13 helical transmembrane spans lie at 24–44 (LLLFHGSFIFPECILIFGLIL), 57–77 (IPWLYFISSTSLVMSITALLF), 99–119 (IFQFLILLCSTLCIPLSVEYI), 124–144 (MAITEFLLFVLTATLGGMFLC), 150–170 (ITIFVAPECFSLCSYLLSGYT), 183–203 (YLLMGGASSSILVHGFSWLYG), 227–247 (PGISIALISITVGIGFKLSPA), 295–315 (WHLLLEILAILSMILGNLIAI), 323–343 (MLAYSSIGQIGYVIIGIIVGD), 347–367 (GYASMITYMLFYISMNLGTFA), 395–415 (ALSSALCLLSLGGLPPLAGFF), 418–438 (LHLFWCGWQAGLYFLVSIGLL), and 484–504 (MIVCVIASTIPGISMNPIIAI).

The protein belongs to the complex I subunit 2 family. NDH is composed of at least 16 different subunits, 5 of which are encoded in the nucleus.

It is found in the plastid. The protein localises to the chloroplast thylakoid membrane. The enzyme catalyses a plastoquinone + NADH + (n+1) H(+)(in) = a plastoquinol + NAD(+) + n H(+)(out). It carries out the reaction a plastoquinone + NADPH + (n+1) H(+)(in) = a plastoquinol + NADP(+) + n H(+)(out). Its function is as follows. NDH shuttles electrons from NAD(P)H:plastoquinone, via FMN and iron-sulfur (Fe-S) centers, to quinones in the photosynthetic chain and possibly in a chloroplast respiratory chain. The immediate electron acceptor for the enzyme in this species is believed to be plastoquinone. Couples the redox reaction to proton translocation, and thus conserves the redox energy in a proton gradient. The polypeptide is NAD(P)H-quinone oxidoreductase subunit 2 B, chloroplastic (Chloranthus spicatus (Chulantree)).